Here is a 485-residue protein sequence, read N- to C-terminus: ATP synthase subunit beta 1 (485 aa).

157-164 (GGAGVGKT) contacts ATP.

Belongs to the ATPase alpha/beta chains family. F-type ATPases have 2 components, CF(1) - the catalytic core - and CF(0) - the membrane proton channel. CF(1) has five subunits: alpha(3), beta(3), gamma(1), delta(1), epsilon(1). CF(0) has three main subunits: a(1), b(2) and c(9-12). The alpha and beta chains form an alternating ring which encloses part of the gamma chain. CF(1) is attached to CF(0) by a central stalk formed by the gamma and epsilon chains, while a peripheral stalk is formed by the delta and b chains.

It localises to the cell inner membrane. It carries out the reaction ATP + H2O + 4 H(+)(in) = ADP + phosphate + 5 H(+)(out). Produces ATP from ADP in the presence of a proton gradient across the membrane. The catalytic sites are hosted primarily by the beta subunits. The polypeptide is ATP synthase subunit beta 1 (Psychromonas ingrahamii (strain DSM 17664 / CCUG 51855 / 37)).